The primary structure comprises 103 residues: Large ribosomal subunit protein uL24 (103 aa).

The protein belongs to the universal ribosomal protein uL24 family. As to quaternary structure, part of the 50S ribosomal subunit.

Its function is as follows. One of two assembly initiator proteins, it binds directly to the 5'-end of the 23S rRNA, where it nucleates assembly of the 50S subunit. One of the proteins that surrounds the polypeptide exit tunnel on the outside of the subunit. This is Large ribosomal subunit protein uL24 from Bacillus licheniformis (strain ATCC 14580 / DSM 13 / JCM 2505 / CCUG 7422 / NBRC 12200 / NCIMB 9375 / NCTC 10341 / NRRL NRS-1264 / Gibson 46).